We begin with the raw amino-acid sequence, 337 residues long: Phosphoribosylformylglycinamidine cyclo-ligase (337 aa).

The protein belongs to the AIR synthase family.

The protein resides in the cytoplasm. The enzyme catalyses 2-formamido-N(1)-(5-O-phospho-beta-D-ribosyl)acetamidine + ATP = 5-amino-1-(5-phospho-beta-D-ribosyl)imidazole + ADP + phosphate + H(+). Its pathway is purine metabolism; IMP biosynthesis via de novo pathway; 5-amino-1-(5-phospho-D-ribosyl)imidazole from N(2)-formyl-N(1)-(5-phospho-D-ribosyl)glycinamide: step 2/2. This Pseudothermotoga lettingae (strain ATCC BAA-301 / DSM 14385 / NBRC 107922 / TMO) (Thermotoga lettingae) protein is Phosphoribosylformylglycinamidine cyclo-ligase.